A 1938-amino-acid polypeptide reads, in one-letter code: Myosin heavy chain, striated muscle (1938 aa).

Positions 29-79 (DGKKNCWVPDEKEGFASAEIQSSKGDEITVKIVADSSTRTVKKDDIQSMNP) constitute a Myosin N-terminal SH3-like domain. In terms of domain architecture, Myosin motor spans 83 to 775 (EKLEDMANMT…VLGNLEEMRD (693 aa)). An ATP-binding site is contributed by 176-183 (GESGAGKT). An actin-binding region spans residues 653-675 (LNKLMKNLYSTHPHFVRCIIPNE). Residues 778-805 (LSKIISMFQAHIRGYLIRKAYKKLQDQR) enclose the IQ domain. Residues 836–1938 (LLSIARQEEE…RSSVSVSASN (1103 aa)) are rodlike tail (S2 and LMM domains). Positions 836-1938 (LLSIARQEEE…RSSVSVSASN (1103 aa)) form a coiled coil. Composition is skewed to basic and acidic residues over residues 1041-1058 (VRGD…DLKS) and 1212-1225 (SKLE…KREM). 4 disordered regions span residues 1041-1062 (VRGD…TQEN), 1187-1332 (SALR…EVRN), 1344-1363 (LEEE…KANN), and 1898-1938 (HELE…SASN). Residues 1265-1285 (RSINELQSQKSRLQAENSDLT) are compositionally biased toward polar residues. Basic and acidic residues-rich tracts occupy residues 1286–1303 (RQLE…KEKS), 1310–1332 (EDAR…EVRN), and 1344–1354 (LEEEQESKSDV). Residues 1922–1938 (RSSVSVQRSSVSVSASN) are compositionally biased toward low complexity.

The protein belongs to the TRAFAC class myosin-kinesin ATPase superfamily. Myosin family. In terms of assembly, muscle myosin is a hexameric protein that consists of 2 heavy chain subunits (MHC), 2 alkali light chain subunits (MLC) and 2 regulatory light chain subunits (MLC-2).

It localises to the cytoplasm. Its subcellular location is the myofibril. In terms of biological role, muscle contraction. Its function is as follows. Myosin is a protein that binds to F-actin and has ATPase activity that is activated by F-actin. This chain is Myosin heavy chain, striated muscle, found in Argopecten irradians (Bay scallop).